The sequence spans 466 residues: Argininosuccinate lyase (466 aa).

This sequence belongs to the lyase 1 family. Argininosuccinate lyase subfamily.

The protein localises to the cytoplasm. It catalyses the reaction 2-(N(omega)-L-arginino)succinate = fumarate + L-arginine. The protein operates within amino-acid biosynthesis; L-arginine biosynthesis; L-arginine from L-ornithine and carbamoyl phosphate: step 3/3. This is Argininosuccinate lyase from Ehrlichia ruminantium (strain Gardel).